The primary structure comprises 215 residues: Thiamine-phosphate synthase (215 aa).

4-amino-2-methyl-5-(diphosphooxymethyl)pyrimidine is bound by residues 37–41 (QLRIK) and N69. Residues D70 and D89 each coordinate Mg(2+). S108 serves as a coordination point for 4-amino-2-methyl-5-(diphosphooxymethyl)pyrimidine. 134–136 (TQT) provides a ligand contact to 2-[(2R,5Z)-2-carboxy-4-methylthiazol-5(2H)-ylidene]ethyl phosphate. K137 provides a ligand contact to 4-amino-2-methyl-5-(diphosphooxymethyl)pyrimidine. Residues G166 and 186–187 (VS) each bind 2-[(2R,5Z)-2-carboxy-4-methylthiazol-5(2H)-ylidene]ethyl phosphate.

The protein belongs to the thiamine-phosphate synthase family. Requires Mg(2+) as cofactor.

It carries out the reaction 2-[(2R,5Z)-2-carboxy-4-methylthiazol-5(2H)-ylidene]ethyl phosphate + 4-amino-2-methyl-5-(diphosphooxymethyl)pyrimidine + 2 H(+) = thiamine phosphate + CO2 + diphosphate. It catalyses the reaction 2-(2-carboxy-4-methylthiazol-5-yl)ethyl phosphate + 4-amino-2-methyl-5-(diphosphooxymethyl)pyrimidine + 2 H(+) = thiamine phosphate + CO2 + diphosphate. The catalysed reaction is 4-methyl-5-(2-phosphooxyethyl)-thiazole + 4-amino-2-methyl-5-(diphosphooxymethyl)pyrimidine + H(+) = thiamine phosphate + diphosphate. Its pathway is cofactor biosynthesis; thiamine diphosphate biosynthesis; thiamine phosphate from 4-amino-2-methyl-5-diphosphomethylpyrimidine and 4-methyl-5-(2-phosphoethyl)-thiazole: step 1/1. Its function is as follows. Condenses 4-methyl-5-(beta-hydroxyethyl)thiazole monophosphate (THZ-P) and 2-methyl-4-amino-5-hydroxymethyl pyrimidine pyrophosphate (HMP-PP) to form thiamine monophosphate (TMP). The polypeptide is Thiamine-phosphate synthase (Yersinia pseudotuberculosis serotype I (strain IP32953)).